The following is a 284-amino-acid chain: Deoxyribonuclease-1 (284 aa).

An N-terminal signal peptide occupies residues methionine 1–alanine 22. Residue asparagine 40 is glycosylated (N-linked (GlcNAc...) asparagine). Glutamate 100 is a catalytic residue. Residues cysteine 123 and cysteine 126 are joined by a disulfide bond. N-linked (GlcNAc...) asparagine glycosylation occurs at asparagine 128. Histidine 156 is an active-site residue. The cysteines at positions 195 and 231 are disulfide-linked.

This sequence belongs to the DNase I family. Ca(2+) is required as a cofactor. Mg(2+) serves as cofactor. As to expression, highest expression in pancreas.

The protein localises to the secreted. It is found in the zymogen granule. It localises to the nucleus envelope. It carries out the reaction Endonucleolytic cleavage to 5'-phosphodinucleotide and 5'-phosphooligonucleotide end-products.. In terms of biological role, serum endocuclease secreted into body fluids by a wide variety of exocrine and endocrine organs. Expressed by non-hematopoietic tissues and preferentially cleaves protein-free DNA. Among other functions, seems to be involved in cell death by apoptosis. Binds specifically to G-actin and blocks actin polymerization. Together with DNASE1L3, plays a key role in degrading neutrophil extracellular traps (NETs). NETs are mainly composed of DNA fibers and are released by neutrophils to bind pathogens during inflammation. Degradation of intravascular NETs by DNASE1 and DNASE1L3 is required to prevent formation of clots that obstruct blood vessels and cause organ damage following inflammation. The polypeptide is Deoxyribonuclease-1 (DNASE1) (Canis lupus familiaris (Dog)).